The following is a 118-amino-acid chain: V-type proton ATPase subunit G 2 (118 aa).

A disordered region spans residues 23-90 (ADARKRKARR…VQGMQSSQQR (68 aa)). The segment covering 35-55 (QAKEEAQMEVEQYRREREQEF) has biased composition (basic and acidic residues). Polar residues-rich tracts occupy residues 56–69 (QSKQQAAMGSQGNL) and 78–89 (RRQVQGMQSSQQ).

Belongs to the V-ATPase G subunit family. V-ATPase is a heteromultimeric enzyme made up of two complexes: the ATP-hydrolytic V1 complex and the proton translocation V0 complex. The V1 complex consists of three catalytic AB heterodimers that form a heterohexamer, three peripheral stalks each consisting of EG heterodimers, one central rotor including subunits D and F, and the regulatory subunits C and H. The proton translocation complex V0 consists of the proton transport subunit a, a ring of proteolipid subunits c9c'', rotary subunit d, subunits e and f, and the accessory subunits ATP6AP1/Ac45 and ATP6AP2/PRR.

The protein localises to the melanosome. Its subcellular location is the cytoplasmic vesicle. It is found in the clathrin-coated vesicle membrane. Its function is as follows. Subunit of the V1 complex of vacuolar(H+)-ATPase (V-ATPase), a multisubunit enzyme composed of a peripheral complex (V1) that hydrolyzes ATP and a membrane integral complex (V0) that translocates protons. V-ATPase is responsible for acidifying and maintaining the pH of intracellular compartments and in some cell types, is targeted to the plasma membrane, where it is responsible for acidifying the extracellular environment. The chain is V-type proton ATPase subunit G 2 (ATP6V1G2) from Macaca mulatta (Rhesus macaque).